A 1816-amino-acid polypeptide reads, in one-letter code: uncharacterized protein (1816 aa).

Disordered regions lie at residues 338–357 (DSSSSSSNNNNNNNNNNNNN) and 562–605 (ELEK…IKPK). The segment covering 339 to 357 (SSSSSSNNNNNNNNNNNNN) has biased composition (low complexity). The segment covering 562-577 (ELEKERIKKEKEDSKK) has biased composition (basic and acidic residues). A compositionally biased stretch (low complexity) spans 581–603 (KQSSSSSSSSTTTTSTTTSSTIK). The 174-residue stretch at 826–999 (LDIVDKRESA…FLKKIDPNRK (174 aa)) folds into the Helicase ATP-binding domain. 839 to 846 (ASTSSGKT) lines the ATP pocket. The short motif at 949 to 952 (DEVH) is the DEAH box element. The 182-residue stretch at 1198–1379 (QLDLVIERFQ…SVVSPSLCLS (182 aa)) folds into the Helicase C-terminal domain. A disordered region spans residues 1388–1487 (TNGSANKSNE…TTTKTPTTTS (100 aa)). The span at 1395–1427 (SNEENKVQVKENEKEREKEKEKEKEKEKEKETI) shows a compositional bias: basic and acidic residues. Acidic residues predominate over residues 1445-1454 (NWDDDEEETA). Low complexity predominate over residues 1456 to 1487 (STKTTPATTPTTTTTENTPATTTTTKTPTTTS).

It belongs to the helicase family. SKI2 subfamily.

The protein resides in the nucleus. This is an uncharacterized protein from Dictyostelium discoideum (Social amoeba).